A 213-amino-acid polypeptide reads, in one-letter code: Protein Flattop (213 aa).

Residues 127-213 (VDQPAEQSKI…HNSRPASQEK (87 aa)) form a disordered region. A compositionally biased stretch (polar residues) spans 151-213 (QHIQDQSRPA…HNSRPASQEK (63 aa)).

This sequence belongs to the Flattop family.

It is found in the cytoplasm. The protein localises to the cytoskeleton. The protein resides in the cilium basal body. It localises to the cell projection. Its subcellular location is the cilium. It is found in the apical cell membrane. The protein localises to the cilium axoneme. In terms of biological role, microtubule inner protein (MIP) part of the dynein-decorated doublet microtubules (DMTs) in cilia axoneme. Acts as a regulator of cilium basal body docking and positioning in mono- and multiciliated cells. Regulates basal body docking and cilia formation in multiciliated lung cells. Regulates kinocilium positioning and stereocilia bundle morphogenesis in the inner ear. The chain is Protein Flattop from Danio rerio (Zebrafish).